The primary structure comprises 602 residues: mRNA-decapping enzyme 1A (602 aa).

S82 is subject to Phosphoserine. Residues 152–161 (RSQQAARDKQ) are compositionally biased toward basic and acidic residues. 3 disordered regions span residues 152-174 (RSQQAARDKQSPSQANGCSDQRP), 191-234 (NQMG…PSGH), and 267-291 (GDASQKEPSSFLPFPFEQSGGAPQS). Phosphoserine is present on residues S162, S199, and S200. Over residues 193-229 (MGGSNISSPGLQPSTQLSNLGSTETLEETPSGSQDKS) the composition is skewed to polar residues. Phosphoserine occurs at positions 335 and 339. T367 carries the phosphothreonine modification. S372 bears the Phosphoserine mark. R395 carries the asymmetric dimethylarginine modification. Residue T420 is modified to Phosphothreonine. S441, S542, S543, and S545 each carry phosphoserine. Residues T548 and T551 each carry the phosphothreonine modification.

It belongs to the DCP1 family. Forms a complex with EDC3, DCP2, DDX6 and EDC4/HEDLS, within this complex directly interacts with EDC3. Part of a cytoplasmic complex containing proteins involved in mRNA decay, including XRN1 and LSM1. Interacts with DCP1B. Interacts with DCP2. Interacts with DDX17 in an RNA-independent manner. Interacts with PNRC2. Interacts with SMAD4. Interacts with UPF1. Interacts with ZC3HAV1. Interacts with ZFP36L1. Interacts with NBDY. Interacts with DHX34; the interaction is RNA-independent. Ubiquitous, with highest expression in the spleen and testis (at protein level).

Its subcellular location is the cytoplasm. It localises to the P-body. The protein localises to the nucleus. The enzyme catalyses a 5'-end (N(7)-methyl 5'-triphosphoguanosine)-ribonucleoside in mRNA + H2O = N(7)-methyl-GDP + a 5'-end phospho-ribonucleoside in mRNA + 2 H(+). Necessary for the degradation of mRNAs, both in normal mRNA turnover and in nonsense-mediated mRNA decay. Removes the 7-methyl guanine cap structure from mRNA molecules, yielding a 5'-phosphorylated mRNA fragment and 7m-GDP. Contributes to the transactivation of target genes after stimulation by TGFB1. Essential for embryonic development. The sequence is that of mRNA-decapping enzyme 1A (Dcp1a) from Mus musculus (Mouse).